The following is a 1026-amino-acid chain: MRFFALFIYRPVATILIAAAITLCGILGFRLLPVAPLPQVDFPVIMVSASLPGASPETMASSVATPLERSLGRIAGVNEMTSSSSLGSTRIILEFNFDRDINGAARDVQAAINAAQSLLPGGMPSRPTYRKANPSDAPIMILTLTSESWSQGKLYDFASTQLAQTIAQIDGVGDVDVGGSSLPAVRVGLNPQALFNQGVSLDEVREAIDSANVRRPQGAIEDSVHRWQIQTNDELKTAAEYQPLIIHYNNGAAVRLGDVASVTDSVQDVRNAGMTNAKPAILLMIRKLPEANIIQTVDGIRAKLPELRAMIPAAIDLQIAQDRSPTIRASLQEVEETLAISVALVILVVFLFLRSGRATLIPAVAVPVSLIGTFAAMYLCGFSLNNLSLMALTIATGFVVDDAIVVLENIARHLEAGMKPLQAALQGTREVGFTVISMSLSLVAVFLPLLLMGGLPGRLLREFAVTLSVAIGISLVVSLTLTPMMCGWMLKSSKPRTQQRKRGVGRLLVALQQGYGTSLKWVLNHTRLVGVVFLGTVALNIWLYIAIPKTFFPEQDTGVLMGGIQADQSISFQAMRGKLQDFMKIIRDDPAVNNVTGFTGGSRVNSGMMFITLKPRGERKETAQQVIDRLRVKLAKEPGARLFLMAVQDIRVGGRQANASYQYTLLSDSLAALREWEPKIRKALSALPQLADVNSDQQDNGAEMNLIYDRDTMSRLGIDVQAANSLLNNAFGQRQISTIYQPMNQYKVVMEVDPRYTQDISALEKMFVINRDGKAIPLSYFAQWRPANAPLSVNHQGLSAASTIAFNLPTGTSLSQATEAINRTMTQLGVPPTVRGSFSGTAQVFQQTMNSQLILIVAAIATVYIVLGILYESYVHPLTILSTLPSAGVGALLALELFNAPFSLIALIGIMLLIGIVKKNAIMMVDFALEAQRSGGLTPEQAIFQACLLRFRPIMMTTLAALFGALPLVLSDGDGSELRQPLGITIVGGLVMSQLLTLYTTPVVYLFFDRLRLRFSRKNSKPVVEI.

A run of 11 helical transmembrane segments spans residues 15-35 (ILIA…LPVA), 333-353 (EVEE…FLFL), 360-380 (LIPA…MYLC), 387-407 (LSLM…IVVL), 431-451 (VGFT…PLLL), 463-483 (FAVT…TLTP), 528-548 (LVGV…IAIP), 853-873 (LILI…LYES), 897-917 (LFNA…IGIV), 953-973 (PIMM…LSDG), and 984-1004 (ITIV…TPVV).

Belongs to the resistance-nodulation-cell division (RND) (TC 2.A.6) family. MdtC subfamily. As to quaternary structure, part of a tripartite efflux system composed of MdtA, MdtB and MdtC. MdtC forms a heteromultimer with MdtB.

The protein localises to the cell inner membrane. The sequence is that of Multidrug resistance protein MdtC from Salmonella paratyphi B (strain ATCC BAA-1250 / SPB7).